A 360-amino-acid chain; its full sequence is Probable dual-specificity RNA methyltransferase RlmN (360 aa).

Glu-97 (proton acceptor) is an active-site residue. The region spanning 103 to 330 (DGDRLTFCIS…TAVRRSRGLD (228 aa)) is the Radical SAM core domain. Cys-110 and Cys-335 are disulfide-bonded. 3 residues coordinate [4Fe-4S] cluster: Cys-117, Cys-121, and Cys-124. Residues 165-166 (GE), Ser-197, 220-222 (SIH), and His-292 contribute to the S-adenosyl-L-methionine site. Cys-335 acts as the S-methylcysteine intermediate in catalysis.

The protein belongs to the radical SAM superfamily. RlmN family. It depends on [4Fe-4S] cluster as a cofactor.

Its subcellular location is the cytoplasm. The enzyme catalyses adenosine(2503) in 23S rRNA + 2 reduced [2Fe-2S]-[ferredoxin] + 2 S-adenosyl-L-methionine = 2-methyladenosine(2503) in 23S rRNA + 5'-deoxyadenosine + L-methionine + 2 oxidized [2Fe-2S]-[ferredoxin] + S-adenosyl-L-homocysteine. It carries out the reaction adenosine(37) in tRNA + 2 reduced [2Fe-2S]-[ferredoxin] + 2 S-adenosyl-L-methionine = 2-methyladenosine(37) in tRNA + 5'-deoxyadenosine + L-methionine + 2 oxidized [2Fe-2S]-[ferredoxin] + S-adenosyl-L-homocysteine. Its function is as follows. Specifically methylates position 2 of adenine 2503 in 23S rRNA and position 2 of adenine 37 in tRNAs. This is Probable dual-specificity RNA methyltransferase RlmN from Gemmatimonas aurantiaca (strain DSM 14586 / JCM 11422 / NBRC 100505 / T-27).